A 257-amino-acid chain; its full sequence is Cyclin-C1-1 (257 aa).

Belongs to the cyclin family. Cyclin C subfamily.

The chain is Cyclin-C1-1 from Oryza sativa subsp. japonica (Rice).